The primary structure comprises 475 residues: Stromelysin-1 (475 aa).

Residues 1–17 (MKGLPVLLWLCTAVCSS) form the signal peptide. A propeptide spans 18 to 97 (YPLHGSEEDA…PRCGVPDVGG (80 aa)) (activation peptide). A Cysteine switch motif is present at residues 88–95 (PRCGVPDV). A Zn(2+)-binding site is contributed by Cys-90. Asn-118 is a glycosylation site (N-linked (GlcNAc...) asparagine). Ca(2+) contacts are provided by Asp-122 and Asp-156. Residues His-166 and Asp-168 each coordinate Zn(2+). Positions 173, 174, 176, and 178 each coordinate Ca(2+). His-181 lines the Zn(2+) pocket. Ca(2+)-binding residues include Gly-188, Asn-190, and Asp-192. His-194 lines the Zn(2+) pocket. Positions 196, 197, and 199 each coordinate Ca(2+). His-216 provides a ligand contact to Zn(2+). Glu-217 is a catalytic residue. Zn(2+) contacts are provided by His-220 and His-226. Hemopexin repeat units lie at residues 285 to 334 (LPMC…WPSL), 335 to 381 (PSNM…GLPE), 383 to 431 (VQKI…FPGI), and 432 to 475 (GTKV…WFNC). Residues Cys-288 and Cys-475 are joined by a disulfide bond. Residue Asp-295 coordinates Ca(2+). Positions 387 and 436 each coordinate Ca(2+).

The protein belongs to the peptidase M10A family. It depends on Ca(2+) as a cofactor. Requires Zn(2+) as cofactor.

Its subcellular location is the secreted. The protein resides in the extracellular space. The protein localises to the extracellular matrix. It carries out the reaction Preferential cleavage where P1', P2' and P3' are hydrophobic residues.. Its activity is regulated as follows. Inhibited by a synthetic peptide corresponding to the inhibitory cysteine switch motif. Inhibited by ethylenediaminetetraacetic acid (EDTA), 1,10-pheanthroline, 2-mecaptoethanol, dithiothreitol and metalloproteinase inhibitor protein TIMP. Functionally, can degrade fibronectin, laminin, gelatins of type I, III, IV, and V; collagens III, IV, X, and IX, and cartilage proteoglycans. Activates procollagenase. Metalloproteinase with a rather broad substrate specificity that can degrade fibronectin, laminin, gelatins of type I, III, IV, and V; collagens III, IV, X, and IX, and cartilage proteoglycans. Activates different molecules including growth factors, plasminogen or other matrix metalloproteinases such as MMP9. Once released into the extracellular matrix (ECM), the inactive pro-enzyme is activated by the plasmin cascade signaling pathway. Also acts intracellularly. For example, in dopaminergic neurons, gets activated by the serine protease HTRA2 upon stress and plays a pivotal role in DA neuronal degeneration by mediating microglial activation and alpha-synuclein/SNCA cleavage. In addition, plays a role in immune response and possesses antiviral activity against various viruses. Mechanistically, translocates from the cytoplasm into the cell nucleus upon virus infection to influence NF-kappa-B activities. This is Stromelysin-1 (Mmp3) from Rattus norvegicus (Rat).